A 1105-amino-acid polypeptide reads, in one-letter code: Protein phosphatase 1 regulatory subunit 26 (1105 aa).

Disordered stretches follow at residues 228 to 382 (LNDK…NKLA), 444 to 468 (QSTYVIPTEPPPPPPEPQCDSDSLV), 504 to 526 (TSPELGSQSSKLSLTHKRKAKAM), and 589 to 748 (LNRG…DSDD). A compositionally biased stretch (basic and acidic residues) spans 275–285 (LLRKHASDSKL). The span at 306–317 (TKTSSPSPKSTP) shows a compositional bias: low complexity. Residues 359–368 (SPTSANSLTH) are compositionally biased toward polar residues. The segment covering 451 to 460 (TEPPPPPPEP) has biased composition (pro residues). Positions 504 to 516 (TSPELGSQSSKLS) are enriched in polar residues. Low complexity predominate over residues 602–612 (SYSSGDKSSSL). A compositionally biased stretch (basic residues) spans 628–647 (SKRKYKKRPKDGKSQCKKRV). Basic and acidic residues predominate over residues 686–701 (NSLEKSKKRREEKAVE). The segment covering 705–715 (PSCSSSPQGNK) has biased composition (polar residues). The segment covering 733-742 (RALDDAHESS) has biased composition (basic and acidic residues).

The protein resides in the nucleus. The protein localises to the nucleolus. In terms of biological role, may inhibit phosphatase activity of protein phosphatase 1 (PP1) complexes. May positively regulate cell proliferation. The sequence is that of Protein phosphatase 1 regulatory subunit 26 (ppp1r26) from Xenopus laevis (African clawed frog).